A 332-amino-acid polypeptide reads, in one-letter code: NADH-quinone oxidoreductase subunit H (332 aa).

9 consecutive transmembrane segments (helical) span residues 4–24 (FAFF…IFAS), 44–64 (IGPD…MIKL), 78–98 (FIFA…LAAI), 120–140 (VALL…FLGG), 165–185 (VGAL…LVDI), 194–214 (FSWL…ALFI), 255–275 (IAGA…FWII), 279–299 (IMMI…RAAF), and 312–332 (YLIL…AVLL).

Belongs to the complex I subunit 1 family. As to quaternary structure, NDH-1 is composed of 14 different subunits. Subunits NuoA, H, J, K, L, M, N constitute the membrane sector of the complex.

The protein localises to the cell inner membrane. The catalysed reaction is a quinone + NADH + 5 H(+)(in) = a quinol + NAD(+) + 4 H(+)(out). NDH-1 shuttles electrons from NADH, via FMN and iron-sulfur (Fe-S) centers, to quinones in the respiratory chain. The immediate electron acceptor for the enzyme in this species is believed to be ubiquinone. Couples the redox reaction to proton translocation (for every two electrons transferred, four hydrogen ions are translocated across the cytoplasmic membrane), and thus conserves the redox energy in a proton gradient. This subunit may bind ubiquinone. The polypeptide is NADH-quinone oxidoreductase subunit H (Campylobacter jejuni (strain RM1221)).